The chain runs to 515 residues: Bifunctional purine biosynthesis protein PurH (515 aa).

Residues 1 to 145 form the MGS-like domain; sequence MTKRALISVS…KNHASVTVVV (145 aa).

This sequence belongs to the PurH family.

The enzyme catalyses (6R)-10-formyltetrahydrofolate + 5-amino-1-(5-phospho-beta-D-ribosyl)imidazole-4-carboxamide = 5-formamido-1-(5-phospho-D-ribosyl)imidazole-4-carboxamide + (6S)-5,6,7,8-tetrahydrofolate. It catalyses the reaction IMP + H2O = 5-formamido-1-(5-phospho-D-ribosyl)imidazole-4-carboxamide. It functions in the pathway purine metabolism; IMP biosynthesis via de novo pathway; 5-formamido-1-(5-phospho-D-ribosyl)imidazole-4-carboxamide from 5-amino-1-(5-phospho-D-ribosyl)imidazole-4-carboxamide (10-formyl THF route): step 1/1. Its pathway is purine metabolism; IMP biosynthesis via de novo pathway; IMP from 5-formamido-1-(5-phospho-D-ribosyl)imidazole-4-carboxamide: step 1/1. This Streptococcus pyogenes serotype M6 (strain ATCC BAA-946 / MGAS10394) protein is Bifunctional purine biosynthesis protein PurH.